The primary structure comprises 476 residues: Cysteine--tRNA ligase (476 aa).

Cys-28 lines the Zn(2+) pocket. Residues 30-40 (PTVYDNTHLGH) carry the 'HIGH' region motif. Positions 208, 233, and 237 each coordinate Zn(2+). Positions 265-269 (KMSKS) match the 'KMSKS' region motif. An ATP-binding site is contributed by Lys-268.

Belongs to the class-I aminoacyl-tRNA synthetase family. It depends on Zn(2+) as a cofactor.

Its subcellular location is the cytoplasm. The catalysed reaction is tRNA(Cys) + L-cysteine + ATP = L-cysteinyl-tRNA(Cys) + AMP + diphosphate. This chain is Cysteine--tRNA ligase, found in Methanococcus maripaludis (strain DSM 14266 / JCM 13030 / NBRC 101832 / S2 / LL).